Consider the following 672-residue polypeptide: DNA-directed RNA polymerase subunit gamma (672 aa).

Positions 70, 72, 85, and 88 each coordinate Zn(2+). Positions 466, 468, and 470 each coordinate Mg(2+).

This sequence belongs to the RNA polymerase beta' chain family. RpoC1 subfamily. In terms of assembly, in cyanobacteria the RNAP catalytic core is composed of 2 alpha, 1 beta, 1 beta', 1 gamma and 1 omega subunit. When a sigma factor is associated with the core the holoenzyme is formed, which can initiate transcription. Requires Mg(2+) as cofactor. It depends on Zn(2+) as a cofactor.

The catalysed reaction is RNA(n) + a ribonucleoside 5'-triphosphate = RNA(n+1) + diphosphate. Its function is as follows. DNA-dependent RNA polymerase catalyzes the transcription of DNA into RNA using the four ribonucleoside triphosphates as substrates. The polypeptide is DNA-directed RNA polymerase subunit gamma (Trichodesmium erythraeum (strain IMS101)).